The primary structure comprises 361 residues: Probable mannose-1-phosphate guanylyltransferase 2 (361 aa).

The GDP-alpha-D-mannose site is built by L6 and V7. G9, G11, T12, R13, and K23 together coordinate diphosphate. 5 residues coordinate GDP-alpha-D-mannose: G85, N109, D111, G146, and N173.

The protein belongs to the transferase hexapeptide repeat family.

The enzyme catalyses alpha-D-mannose 1-phosphate + GTP + H(+) = GDP-alpha-D-mannose + diphosphate. It functions in the pathway nucleotide-sugar biosynthesis; GDP-alpha-D-mannose biosynthesis; GDP-alpha-D-mannose from alpha-D-mannose 1-phosphate (GTP route): step 1/1. In terms of biological role, catalyzes a reaction of the Smirnoff-Wheeler pathway, the major route to ascorbate biosynthesis in plants. This Oryza sativa subsp. japonica (Rice) protein is Probable mannose-1-phosphate guanylyltransferase 2.